A 197-amino-acid polypeptide reads, in one-letter code: MSLQIDAVILAGGMARRMGGDDKGLVELNGKAMIEHTIERIKPQVKEILINANRNQTRYAEFGFTVLSDEHTGFLGPLAGMITAMGHTQADYLLVVPCDCPLLPRDLVARLLAAIKANDAELAVASDGEREQPVVMLLKPSLRESMTAFLEAGERKIDFWYAKHRFAVAAFADQPNAFVNVNTPEQKQRLAAEINQS.

GTP-binding positions include 10–12 (LAG), Lys23, Asn51, Asp69, and Asp99. Asp99 is a binding site for Mg(2+).

Belongs to the MobA family. In terms of assembly, monomer. Mg(2+) serves as cofactor.

Its subcellular location is the cytoplasm. The catalysed reaction is Mo-molybdopterin + GTP + H(+) = Mo-molybdopterin guanine dinucleotide + diphosphate. Functionally, transfers a GMP moiety from GTP to Mo-molybdopterin (Mo-MPT) cofactor (Moco or molybdenum cofactor) to form Mo-molybdopterin guanine dinucleotide (Mo-MGD) cofactor. This is Molybdenum cofactor guanylyltransferase from Shewanella sp. (strain MR-4).